The primary structure comprises 159 residues: Carbohydrate sulfotransferase 15 (159 aa).

Topologically, residues 1–159 are lumenal; sequence SGTTDFYRRI…YQPHNERLVK (159 aa). N-linked (GlcNAc...) asparagine glycosylation is found at asparagine 42 and asparagine 112.

The protein belongs to the sulfotransferase 1 family. A divalent metal cation is required as a cofactor. It depends on glutathione as a cofactor.

The protein localises to the golgi apparatus membrane. The catalysed reaction is dermatan 4'-sulfate + n 3'-phosphoadenylyl sulfate = dermatan 4',6'-bissulfate + n adenosine 3',5'-bisphosphate + n H(+). It carries out the reaction chondroitin 4'-sulfate + n 3'-phosphoadenylyl sulfate = chondroitin 4',6'-bissulfate + n adenosine 3',5'-bisphosphate + n H(+). Sulfotransferase that transfers sulfate from 3'-phosphoadenosine 5'-phosphosulfate (PAPS) to the C-6 hydroxyl group of the GalNAc 4-sulfate residue of chondroitin sulfate A and forms chondroitin sulfate E containing GlcA-GalNAc(4,6-SO(4)) repeating units. The chain is Carbohydrate sulfotransferase 15 (GALNAC4S6ST) from Nototodarus sloanii (Wellington flying squid).